The chain runs to 411 residues: Probable peptidoglycan glycosyltransferase FtsW (411 aa).

Residues 1-40 (MLERMLPFLGRKRDKAAADLPVRVGHSAPRNSRMLEYDQN) are Cytoplasmic-facing. Residues 41 to 61 (LVWVTLLLLAYGLVMVYSATI) form a helical membrane-spanning segment. At 62–81 (SFHDSPRYAQWSPYHYFIRD) the chain is on the periplasmic side. A helical membrane pass occupies residues 82 to 102 (LFSIAAALLASWIVVQIPMAE). Over 103 to 109 (LQKWSMR) the chain is Cytoplasmic. The chain crosses the membrane as a helical span at residues 110–130 (FFFLSLIGLVLVLLPHIGKDV). Over 131–136 (NGSKRW) the chain is Periplasmic. Residues 137 to 157 (VVFPGGLNFQPSELVKLTALI) traverse the membrane as a helical segment. Residues 158-172 (YAADFMVRKQEVKQS) are Cytoplasmic-facing. The chain crosses the membrane as a helical span at residues 173 to 193 (LLKTFLPMMAVMMIVGVLLLA). Over 194 to 196 (EPD) the chain is Periplasmic. The helical transmembrane segment at 197–217 (MGAFLVIASITLAILFLGGAN) threads the bilayer. The Cytoplasmic segment spans residues 218-219 (GK). Residues 220–240 (LFSVFSVAVIGAFVLMIVLSP) traverse the membrane as a helical segment. The Periplasmic segment spans residues 241–298 (WRRDRIFAYLNPWSESNALGSAYQLSHALIAMGRGEWFGVGLGGSIEKLHYLPEAHTD). The chain crosses the membrane as a helical span at residues 299–319 (FLLAIIGEELGLVGVGVVIFA). The Cytoplasmic portion of the chain corresponds to 320–347 (FYWIVRRAFDIGRQALVLDRMYSALVAQ). Residues 348–368 (GIGVWIGGQAFINIGVNLGLL) traverse the membrane as a helical segment. The Periplasmic segment spans residues 369-374 (PTKGLT). A helical transmembrane segment spans residues 375–395 (LPLMSYGGSALLLNCMAIAVL). At 396 to 411 (LRVDFENRILMRGGHV) the chain is on the cytoplasmic side.

This sequence belongs to the SEDS family. FtsW subfamily.

The protein localises to the cell inner membrane. It carries out the reaction [GlcNAc-(1-&gt;4)-Mur2Ac(oyl-L-Ala-gamma-D-Glu-L-Lys-D-Ala-D-Ala)](n)-di-trans,octa-cis-undecaprenyl diphosphate + beta-D-GlcNAc-(1-&gt;4)-Mur2Ac(oyl-L-Ala-gamma-D-Glu-L-Lys-D-Ala-D-Ala)-di-trans,octa-cis-undecaprenyl diphosphate = [GlcNAc-(1-&gt;4)-Mur2Ac(oyl-L-Ala-gamma-D-Glu-L-Lys-D-Ala-D-Ala)](n+1)-di-trans,octa-cis-undecaprenyl diphosphate + di-trans,octa-cis-undecaprenyl diphosphate + H(+). It functions in the pathway cell wall biogenesis; peptidoglycan biosynthesis. Its function is as follows. Peptidoglycan polymerase that is essential for cell division. The sequence is that of Probable peptidoglycan glycosyltransferase FtsW from Thiomonas intermedia (strain K12) (Thiobacillus intermedius).